We begin with the raw amino-acid sequence, 722 residues long: Protein HAPLESS 2-A (722 aa).

Residues methionine 1–glycine 24 form the signal peptide. Over threonine 25 to tyrosine 552 the chain is Extracellular. 7 disulfide bridges follow: cysteine 36–cysteine 48, cysteine 129–cysteine 159, cysteine 141–cysteine 188, cysteine 160–cysteine 315, cysteine 162–cysteine 171, cysteine 298–cysteine 322, and cysteine 435–cysteine 473. A helical membrane pass occupies residues valine 553–leucine 573. Over leucine 574–valine 722 the chain is Cytoplasmic. Residues arginine 598–proline 641 show a composition bias toward basic residues. Disordered stretches follow at residues arginine 598–histidine 665 and arginine 680–valine 722. The span at valine 646 to arginine 662 shows a compositional bias: basic and acidic residues. Over residues arginine 701–histidine 711 the composition is skewed to basic residues. Basic and acidic residues predominate over residues glycine 712 to valine 722.

It belongs to the HAP2/GCS1 family.

Its subcellular location is the endoplasmic reticulum membrane. The protein localises to the cell membrane. Functionally, required for male fertility. Plays a role in pollen tube guidance and successful gamete attachment. Essential for the fusion of gametes during double fertilization, where one male gamete fuses with the egg to produce a zygote, and another male gamete fuses with the central cell to produce the endosperm. Mediates the fusion of cell membranes. Not required for pollen tube outgrowth. The sequence is that of Protein HAPLESS 2-A (HAP2A) from Oryza sativa subsp. japonica (Rice).